The sequence spans 159 residues: MADS-box transcription factor 23 (159 aa).

The 61-residue stretch at 1–61 folds into the MADS-box domain; sequence MGRGKIEIKR…SRLYDFASSS (61 aa). The K-box domain occupies 86–159; that stretch reads AKLWQQEAAS…QELSRKVVTT (74 aa).

As to expression, expressed in seedling roots and developing seeds.

The protein resides in the nucleus. Functionally, probable transcription factor. The polypeptide is MADS-box transcription factor 23 (MADS23) (Oryza sativa subsp. japonica (Rice)).